A 464-amino-acid chain; its full sequence is UDP-glycosyltransferase 76C1 (464 aa).

UDP-alpha-D-glucose-binding positions include Ser279, 338–340, 355–363, and 377–380; these read APQ, HNGWNSTLE, and KWDQ.

It belongs to the UDP-glycosyltransferase family.

Inhibited by olomoucine and 3-isobutyl-1-methylxanthine. Involved in the N-glucosylation of cytokinins. Catalyzes the formation of both the 7-N and the 9-N-glucosides. This chain is UDP-glycosyltransferase 76C1 (UGT76C1), found in Arabidopsis thaliana (Mouse-ear cress).